A 256-amino-acid polypeptide reads, in one-letter code: Pimeloyl-[acyl-carrier protein] methyl ester esterase (256 aa).

The AB hydrolase-1 domain maps to 15–242 (HLVLLHGWGL…AAHAPFISHP (228 aa)). Substrate is bound by residues Trp22, 82 to 83 (SL), and 143 to 147 (FLALQ). The active-site Nucleophile is the Ser82. Active-site residues include Asp207 and His235. A substrate-binding site is contributed by His235.

The protein belongs to the AB hydrolase superfamily. Carboxylesterase BioH family. Monomer.

Its subcellular location is the cytoplasm. It carries out the reaction 6-carboxyhexanoyl-[ACP] methyl ester + H2O = 6-carboxyhexanoyl-[ACP] + methanol + H(+). It participates in cofactor biosynthesis; biotin biosynthesis. Functionally, the physiological role of BioH is to remove the methyl group introduced by BioC when the pimeloyl moiety is complete. It allows to synthesize pimeloyl-ACP via the fatty acid synthetic pathway through the hydrolysis of the ester bonds of pimeloyl-ACP esters. The polypeptide is Pimeloyl-[acyl-carrier protein] methyl ester esterase (Escherichia coli O7:K1 (strain IAI39 / ExPEC)).